A 1545-amino-acid chain; its full sequence is Pentafunctional AROM polypeptide (1545 aa).

Residues 1-383 (MSGLIEKVSI…YEPKASYVND (383 aa)) are 3-dehydroquinate synthase. Residues 44–46 (DSN), 82–85 (EANK), 113–115 (GGV), and Asp-118 contribute to the NAD(+) site. Position 129 (Arg-129) interacts with 7-phospho-2-dehydro-3-deoxy-D-arabino-heptonate. 138–139 (TS) provides a ligand contact to NAD(+). 7-phospho-2-dehydro-3-deoxy-D-arabino-heptonate is bound by residues Asp-145 and Lys-151. An NAD(+)-binding site is contributed by Lys-160. A 7-phospho-2-dehydro-3-deoxy-D-arabino-heptonate-binding site is contributed by Asn-161. NAD(+) is bound by residues 178-181 (FLET) and Asn-189. Residue Glu-193 coordinates Zn(2+). 7-phospho-2-dehydro-3-deoxy-D-arabino-heptonate-binding positions include 193-196 (EVVK) and Lys-249. The active-site Proton acceptor; for 3-dehydroquinate synthase activity is the Glu-259. Residues 263–267 (RNLLN) and His-270 contribute to the 7-phospho-2-dehydro-3-deoxy-D-arabino-heptonate site. His-270 is a binding site for Zn(2+). The active-site Proton acceptor; for 3-dehydroquinate synthase activity is the His-274. 7-phospho-2-dehydro-3-deoxy-D-arabino-heptonate-binding residues include His-286 and Lys-355. Zn(2+) is bound at residue His-286. The segment at 396–840 (VKDFNSAPST…WDILHTTFNV (445 aa)) is EPSP synthase. Residue Cys-822 is the For EPSP synthase activity of the active site. The segment at 859–1049 (DKSIIVIGMR…IPNGRSAFVC (191 aa)) is shikimate kinase. 866–873 (GMRAAGKS) contacts ATP. Positions 1050–1261 (LTYEDLAPVS…AAPGQLTLKE (212 aa)) are 3-dehydroquinase. The active-site Proton acceptor; for 3-dehydroquinate dehydratase activity is the His-1166. The Schiff-base intermediate with substrate; for 3-dehydroquinate dehydratase activity role is filled by Lys-1195. Residues 1274–1545 (RKKFYIVGKP…GYQFSSHIDL (272 aa)) are shikimate dehydrogenase.

The protein in the N-terminal section; belongs to the sugar phosphate cyclases superfamily. Dehydroquinate synthase family. This sequence in the 2nd section; belongs to the EPSP synthase family. It in the 3rd section; belongs to the shikimate kinase family. In the 4th section; belongs to the type-I 3-dehydroquinase family. The protein in the C-terminal section; belongs to the shikimate dehydrogenase family. Homodimer. Requires Zn(2+) as cofactor.

It is found in the cytoplasm. The catalysed reaction is 7-phospho-2-dehydro-3-deoxy-D-arabino-heptonate = 3-dehydroquinate + phosphate. It catalyses the reaction 3-dehydroquinate = 3-dehydroshikimate + H2O. It carries out the reaction shikimate + NADP(+) = 3-dehydroshikimate + NADPH + H(+). The enzyme catalyses shikimate + ATP = 3-phosphoshikimate + ADP + H(+). The catalysed reaction is 3-phosphoshikimate + phosphoenolpyruvate = 5-O-(1-carboxyvinyl)-3-phosphoshikimate + phosphate. It participates in metabolic intermediate biosynthesis; chorismate biosynthesis; chorismate from D-erythrose 4-phosphate and phosphoenolpyruvate: step 2/7. The protein operates within metabolic intermediate biosynthesis; chorismate biosynthesis; chorismate from D-erythrose 4-phosphate and phosphoenolpyruvate: step 3/7. It functions in the pathway metabolic intermediate biosynthesis; chorismate biosynthesis; chorismate from D-erythrose 4-phosphate and phosphoenolpyruvate: step 4/7. Its pathway is metabolic intermediate biosynthesis; chorismate biosynthesis; chorismate from D-erythrose 4-phosphate and phosphoenolpyruvate: step 5/7. It participates in metabolic intermediate biosynthesis; chorismate biosynthesis; chorismate from D-erythrose 4-phosphate and phosphoenolpyruvate: step 6/7. Its function is as follows. The AROM polypeptide catalyzes 5 consecutive enzymatic reactions in prechorismate polyaromatic amino acid biosynthesis. In Komagataella phaffii (strain GS115 / ATCC 20864) (Yeast), this protein is Pentafunctional AROM polypeptide.